We begin with the raw amino-acid sequence, 57 residues long: UPF0391 membrane protein IL0696 (57 aa).

The next 2 membrane-spanning stretches (helical) occupy residues 4–24 and 28–48; these read WVLI…GGIA and AGIA…SLVV.

It belongs to the UPF0391 family.

Its subcellular location is the cell membrane. The chain is UPF0391 membrane protein IL0696 from Idiomarina loihiensis (strain ATCC BAA-735 / DSM 15497 / L2-TR).